A 558-amino-acid chain; its full sequence is Suppressor of zyg-1 protein 20 (558 aa).

The SUZ domain occupies 45-146 (KVKAEESSGV…ARNRILGTEY (102 aa)). Disordered stretches follow at residues 50 to 132 (ESSG…ERQA), 205 to 241 (FTQP…QQSL), and 374 to 558 (QRNQ…NRPQ). Basic and acidic residues predominate over residues 69-81 (EEPKRVFLRRPKD). A compositionally biased stretch (polar residues) spans 94 to 109 (PPTSADTEEQPVTNVR). Over residues 117–131 (NQKEKQPAPTYEERQ) the composition is skewed to basic and acidic residues. Composition is skewed to low complexity over residues 374–394 (QRNQ…QNRQ) and 424–477 (NNGQ…QQQQ). 2 stretches are compositionally biased toward polar residues: residues 478 to 508 (NKSG…SQNP) and 545 to 558 (SASQ…NRPQ).

In terms of assembly, interacts (via C-terminus) with atx-2 (via C-terminus); the interaction is RNA independent. Interacts with let-92. In terms of processing, phosphorylated. May be dephosphorylated by let-92.

It is found in the cytoplasm. Its subcellular location is the cytoskeleton. The protein resides in the microtubule organizing center. The protein localises to the centrosome. It localises to the centriole. It is found in the nucleus. Its subcellular location is the nucleolus. The protein resides in the chromosome. Its function is as follows. RNA binding protein that is required for normal cell division and cytokinesis during embryonic development. Functions with RNA-binding protein atx-2 to ensure embryonic cell division, and to this end, plays a role in the regulation of centrosome assembly, position and size, and in astral microtubule outgrowth and nucleation. Furthermore, negatively regulates the levels of the protein kinase zyg-1 at the centrosome. Also involved in ensuring centrosome attachment to the nuclear envelope. This Caenorhabditis elegans protein is Suppressor of zyg-1 protein 20.